Here is a 577-residue protein sequence, read N- to C-terminus: Sulfite reductase [NADPH] hemoprotein beta-component (577 aa).

4 residues coordinate [4Fe-4S] cluster: Cys441, Cys447, Cys486, and Cys490. Siroheme is bound at residue Cys490.

This sequence belongs to the nitrite and sulfite reductase 4Fe-4S domain family. As to quaternary structure, alpha(8)-beta(8). The alpha component is a flavoprotein, the beta component is a hemoprotein. Siroheme is required as a cofactor. The cofactor is [4Fe-4S] cluster.

The catalysed reaction is hydrogen sulfide + 3 NADP(+) + 3 H2O = sulfite + 3 NADPH + 4 H(+). It participates in sulfur metabolism; hydrogen sulfide biosynthesis; hydrogen sulfide from sulfite (NADPH route): step 1/1. Functionally, component of the sulfite reductase complex that catalyzes the 6-electron reduction of sulfite to sulfide. This is one of several activities required for the biosynthesis of L-cysteine from sulfate. This chain is Sulfite reductase [NADPH] hemoprotein beta-component, found in Pectobacterium atrosepticum (strain SCRI 1043 / ATCC BAA-672) (Erwinia carotovora subsp. atroseptica).